The chain runs to 1408 residues: DNA-directed RNA polymerase subunit beta' (1408 aa).

Zn(2+)-binding residues include C70, C72, C85, and C88. Mg(2+)-binding residues include D460, D462, and D464. Zn(2+) contacts are provided by C814, C888, C895, and C898.

Belongs to the RNA polymerase beta' chain family. The RNAP catalytic core consists of 2 alpha, 1 beta, 1 beta' and 1 omega subunit. When a sigma factor is associated with the core the holoenzyme is formed, which can initiate transcription. Mg(2+) is required as a cofactor. Requires Zn(2+) as cofactor.

It carries out the reaction RNA(n) + a ribonucleoside 5'-triphosphate = RNA(n+1) + diphosphate. Its function is as follows. DNA-dependent RNA polymerase catalyzes the transcription of DNA into RNA using the four ribonucleoside triphosphates as substrates. The protein is DNA-directed RNA polymerase subunit beta' of Baumannia cicadellinicola subsp. Homalodisca coagulata.